We begin with the raw amino-acid sequence, 235 residues long: Elongation factor Tu, chloroplastic (235 aa).

Residues lysine 1 to glutamine 125 form the tr-type G domain. Asparagine 47–aspartate 50 provides a ligand contact to GTP.

It belongs to the TRAFAC class translation factor GTPase superfamily. Classic translation factor GTPase family. EF-Tu/EF-1A subfamily.

It is found in the plastid. It localises to the chloroplast. The catalysed reaction is GTP + H2O = GDP + phosphate + H(+). In terms of biological role, GTP hydrolase that promotes the GTP-dependent binding of aminoacyl-tRNA to the A-site of ribosomes during protein biosynthesis. The polypeptide is Elongation factor Tu, chloroplastic (tufA) (Gonium pectorale (Green alga)).